The sequence spans 112 residues: Large ribosomal subunit protein uL24 (112 aa).

Belongs to the universal ribosomal protein uL24 family. As to quaternary structure, part of the 50S ribosomal subunit.

In terms of biological role, one of two assembly initiator proteins, it binds directly to the 5'-end of the 23S rRNA, where it nucleates assembly of the 50S subunit. Its function is as follows. One of the proteins that surrounds the polypeptide exit tunnel on the outside of the subunit. This is Large ribosomal subunit protein uL24 from Magnetococcus marinus (strain ATCC BAA-1437 / JCM 17883 / MC-1).